The chain runs to 173 residues: uncharacterized protein (173 aa).

A helical membrane pass occupies residues 1–21 (MFIVFYLILIIFIFIYFHVYI).

This sequence to T.pallidum TP0711.

The protein resides in the membrane. This is an uncharacterized protein from Borreliella burgdorferi (strain ATCC 35210 / DSM 4680 / CIP 102532 / B31) (Borrelia burgdorferi).